We begin with the raw amino-acid sequence, 295 residues long: Tyrosine recombinase XerC (295 aa).

The Core-binding (CB) domain maps to 1–85 (MQNALQKYYD…ALRQFLAYLV (85 aa)). A Tyr recombinase domain is found at 106–285 (YLPKNIDQEQ…DFKHLTDVYD (180 aa)). Catalysis depends on residues arginine 145, lysine 169, histidine 237, arginine 240, and histidine 263. Catalysis depends on tyrosine 272, which acts as the O-(3'-phospho-DNA)-tyrosine intermediate.

Belongs to the 'phage' integrase family. XerC subfamily. Forms a cyclic heterotetrameric complex composed of two molecules of XerC and two molecules of XerD.

The protein localises to the cytoplasm. Its function is as follows. Site-specific tyrosine recombinase, which acts by catalyzing the cutting and rejoining of the recombining DNA molecules. The XerC-XerD complex is essential to convert dimers of the bacterial chromosome into monomers to permit their segregation at cell division. It also contributes to the segregational stability of plasmids. The polypeptide is Tyrosine recombinase XerC (Actinobacillus succinogenes (strain ATCC 55618 / DSM 22257 / CCUG 43843 / 130Z)).